A 212-amino-acid polypeptide reads, in one-letter code: 2',3'-cyclic-nucleotide 3'-phosphodiesterase (212 aa).

Catalysis depends on His-51, which acts as the Proton donor/acceptor. Substrate is bound at residue Thr-53. His-146 functions as the Proton donor/acceptor in the catalytic mechanism. Positions 148 and 151 each coordinate substrate.

This sequence belongs to the 2H phosphoesterase superfamily. CPD1 family.

The protein localises to the golgi apparatus. The catalysed reaction is a nucleoside 2',3'-cyclic phosphate + H2O = a nucleoside 2'-phosphate + H(+). Functionally, involved in the metabolism of ADP-ribose 1',2'-cyclic phosphate which is produced as a consequence of tRNA splicing. This chain is 2',3'-cyclic-nucleotide 3'-phosphodiesterase (cpd-7), found in Neurospora crassa (strain ATCC 24698 / 74-OR23-1A / CBS 708.71 / DSM 1257 / FGSC 987).